Consider the following 260-residue polypeptide: UPF0246 protein Bphyt_1375 (260 aa).

Belongs to the UPF0246 family.

The sequence is that of UPF0246 protein Bphyt_1375 from Paraburkholderia phytofirmans (strain DSM 17436 / LMG 22146 / PsJN) (Burkholderia phytofirmans).